The chain runs to 250 residues: Cell division protein FtsQ (250 aa).

Residues methionine 1–alanine 11 lie on the Cytoplasmic side of the membrane. Residues alanine 12–isoleucine 32 traverse the membrane as a helical segment. Residues glutamine 33 to lysine 250 are Periplasmic-facing. The region spanning phenylalanine 37–tyrosine 106 is the POTRA domain.

Belongs to the FtsQ/DivIB family. FtsQ subfamily. As to quaternary structure, part of a complex composed of FtsB, FtsL and FtsQ.

The protein localises to the cell inner membrane. Essential cell division protein. May link together the upstream cell division proteins, which are predominantly cytoplasmic, with the downstream cell division proteins, which are predominantly periplasmic. May control correct divisome assembly. The sequence is that of Cell division protein FtsQ from Burkholderia pseudomallei (strain K96243).